A 240-amino-acid chain; its full sequence is Protein MGARP (240 aa).

At 1–40 the chain is on the cytoplasmic side; the sequence is MYLRRAVSKTLALPLRAPPNPAPLGKDASLRRMSSNRFPG. The chain crosses the membrane as a helical; Anchor for type IV membrane protein span at residues 41-63; sequence SSGSNMIYYLVVGVTVSAGGYYA. Residues 64 to 240 are Mitochondrial intermembrane-facing; sequence YKTVTSDQAK…VGSEAASAQG (177 aa). Residues 166-240 are disordered; sequence RETTEVNPET…VGSEAASAQG (75 aa). The span at 170–181 shows a compositional bias: low complexity; that stretch reads EVNPETTPEVTN. Positions 191–201 are enriched in basic and acidic residues; that stretch reads DNDKDTTKNET. Residues 202–213 show a composition bias toward acidic residues; sequence SDEYAELEEENS. Residues 228–240 are compositionally biased toward low complexity; that stretch reads EASVGSEAASAQG.

Interacts with RHOT1/Miro-1, TRAK1/OIP106 and TRAK2/GRIF1. Interacts with RHOT2/Miro-2. As to expression, expressed in the brain, adrenal gland and corneal endothelium (CE). Expressed in steroid-producing cells of the ovary and testis (at protein level). Expressed in steroid-producing cells of the ovary and testis. Weakly expressed in placenta. Expressed in corneal endothelial cells.

It localises to the mitochondrion. It is found in the mitochondrion outer membrane. The protein resides in the mitochondrion inner membrane. Its function is as follows. Plays a role in the trafficking of mitochondria along microtubules. Regulates the kinesin-mediated axonal transport of mitochondria to nerve terminals along microtubules during hypoxia. Participates in the translocation of TRAK2/GRIF1 from the cytoplasm to the mitochondrion. Also plays a role in steroidogenesis through maintenance of mitochondrial abundance and morphology. Plays an inhibitory role during neocortex development by regulating mitochondrial morphology, distribution and motility in neocortical neurons. This Homo sapiens (Human) protein is Protein MGARP (MGARP).